The primary structure comprises 199 residues: Pyridoxal 5'-phosphate synthase subunit PdxT (199 aa).

49-51 (GES) provides a ligand contact to L-glutamine. Cysteine 81 serves as the catalytic Nucleophile. Residues arginine 110 and 139–140 (IR) contribute to the L-glutamine site. Catalysis depends on charge relay system residues histidine 175 and glutamate 177.

This sequence belongs to the glutaminase PdxT/SNO family. In the presence of PdxS, forms a dodecamer of heterodimers. Only shows activity in the heterodimer.

It catalyses the reaction aldehydo-D-ribose 5-phosphate + D-glyceraldehyde 3-phosphate + L-glutamine = pyridoxal 5'-phosphate + L-glutamate + phosphate + 3 H2O + H(+). It carries out the reaction L-glutamine + H2O = L-glutamate + NH4(+). Its pathway is cofactor biosynthesis; pyridoxal 5'-phosphate biosynthesis. Catalyzes the hydrolysis of glutamine to glutamate and ammonia as part of the biosynthesis of pyridoxal 5'-phosphate. The resulting ammonia molecule is channeled to the active site of PdxS. The protein is Pyridoxal 5'-phosphate synthase subunit PdxT of Frankia alni (strain DSM 45986 / CECT 9034 / ACN14a).